Reading from the N-terminus, the 85-residue chain is Small ribosomal subunit protein uS17 (85 aa).

Belongs to the universal ribosomal protein uS17 family. Part of the 30S ribosomal subunit.

In terms of biological role, one of the primary rRNA binding proteins, it binds specifically to the 5'-end of 16S ribosomal RNA. The protein is Small ribosomal subunit protein uS17 of Syntrophus aciditrophicus (strain SB).